A 556-amino-acid polypeptide reads, in one-letter code: Formate--tetrahydrofolate ligase 1 (556 aa).

Residue 65 to 72 (TPAGEGKT) coordinates ATP.

It belongs to the formate--tetrahydrofolate ligase family.

The enzyme catalyses (6S)-5,6,7,8-tetrahydrofolate + formate + ATP = (6R)-10-formyltetrahydrofolate + ADP + phosphate. The protein operates within one-carbon metabolism; tetrahydrofolate interconversion. The protein is Formate--tetrahydrofolate ligase 1 of Desulfitobacterium hafniense (strain Y51).